A 1654-amino-acid chain; its full sequence is Microtubule cross-linking factor 2 (1654 aa).

Residues 1–188 (METPAGESSA…VAASSVGSSR (188 aa)) form a disordered region. A compositionally biased stretch (low complexity) spans 55–66 (GSATACGTASSA). Residues 102–113 (GTGPRPPPPPPS) are compositionally biased toward pro residues. A compositionally biased stretch (low complexity) spans 132–147 (LGLELALSSDAESAAG). The segment at 209–238 (PGGLVRELEELRSENDYLKDEIEELRAEML) is required for association with Golgi apparatus membrane. Coiled-coil stretches lie at residues 216–279 (LEEL…AERR), 308–349 (SMRL…LQTE), 448–546 (LKLV…YRSE), 816–843 (IKDL…ERQL), and 1079–1113 (SQEK…LQKA). Residues 348-379 (TELDRPREHSLKKRGTRSLGKTDKKPTAQEDS) are disordered. A compositionally biased stretch (basic and acidic residues) spans 1122 to 1145 (SDMEKQDNSWKEARSEKTHDKEGV). The interval 1122 to 1146 (SDMEKQDNSWKEARSEKTHDKEGVS) is disordered. S1165 and S1251 each carry phosphoserine. The segment at 1406-1505 (LVSVRSKQIS…HSGSTESVWK (100 aa)) is KR-rich domain required for microtubules binding. Disordered stretches follow at residues 1427–1450 (RPCC…LDST), 1537–1560 (PTTA…YHQP), and 1627–1654 (NTIR…AAPQ). Residues 1628 to 1638 (TIRHSPSKCRL) are compositionally biased toward basic residues.

This sequence belongs to the MTCL family. In terms of assembly, interacts with CLASP2. Interacts with CLASP1. The C-terminal SOGA 25 kDa form occurs as a monomer. Proteolytically cleaved into a C-terminal SOGA 25 kDa form that is detected in plasma. Proteolytically cleaved in primary hepatocytes into a C-terminal SOGA 80 kDa form. Post-translationally, phosphorylated during mitosis in a CDK1-dependent manner. As to expression, expressed in liver (at protein level).

The protein localises to the secreted. The protein resides in the cytoplasm. Its subcellular location is the cytoskeleton. It is found in the golgi apparatus membrane. It localises to the midbody. Functionally, microtubule-associated factor that enables integration of the centrosomal and Golgi-associated microtubules on the Golgi membrane, supporting directional migration. Preferentially acts on the perinuclear microtubules accumulated around the Golgi. Associates with the Golgi membrane through the N-terminal coiled-coil region and directly binds microtubules through the C-terminal domain. Required for faithful chromosome segregation during mitosis. Regulates autophagy by playing a role in the reduction of glucose production in an adiponectin- and insulin-dependent manner. The sequence is that of Microtubule cross-linking factor 2 (Mtcl2) from Mus musculus (Mouse).